The primary structure comprises 156 residues: MVMSLLWALLQDMVLAAIPALGFAMVFNVPMRALRYCALLGALGHGSRMLMIHFGMDIEPASLLASIMIGMIGINWSRWLLAHPKVFTVAAVIPMFPGISAYTAMISVVEISHLGYSEVLMSTMVTNFLKASFIVGSLSIGLSLPGLWLYRKRPGV.

Transmembrane regions (helical) follow at residues 7–27 (WALLQDMVLAAIPALGFAMVF), 54–74 (FGMDIEPASLLASIMIGMIGI), 86–106 (VFTVAAVIPMFPGISAYTAMI), and 128–148 (FLKASFIVGSLSIGLSLPGLW).

The protein belongs to the ThrE exporter (TC 2.A.79) family. In terms of assembly, the transporter is composed of YjjB and YjjP.

It is found in the cell inner membrane. Involved in succinate export with YjjP. Both proteins are required for export. The protein is Probable succinate transporter subunit YjjB of Yersinia enterocolitica serotype O:8 / biotype 1B (strain NCTC 13174 / 8081).